A 415-amino-acid polypeptide reads, in one-letter code: Phosphoribosylamine--glycine ligase (415 aa).

Residues 108–311 (KKIMEKYNIP…LMQHIIDLDE (204 aa)) form the ATP-grasp domain. Residue 134-191 (IENCELPVVVKKDGLAAGKGVIIADTIEAARSAIEIMYGDEEEGTVVFETFLEGEEFS) participates in ATP binding. Mg(2+) contacts are provided by Glu-281 and Asn-283.

It belongs to the GARS family. Mg(2+) serves as cofactor. Mn(2+) is required as a cofactor.

It carries out the reaction 5-phospho-beta-D-ribosylamine + glycine + ATP = N(1)-(5-phospho-beta-D-ribosyl)glycinamide + ADP + phosphate + H(+). The protein operates within purine metabolism; IMP biosynthesis via de novo pathway; N(1)-(5-phospho-D-ribosyl)glycinamide from 5-phospho-alpha-D-ribose 1-diphosphate: step 2/2. This chain is Phosphoribosylamine--glycine ligase, found in Staphylococcus aureus (strain MW2).